The primary structure comprises 892 residues: MNDAECLSHLLQVCSRKTEEFVRTLDTKHMVWLLEIEEEARKMFSSDFNAEPELMPKTPSQKRRRKKRTSILPDENRDPSGRRISRRRSSANWSSSVRRLSVRNQIKANDDSIQEGPAQPKRMTRARAQASIMCPPAVEQALPESPSQLCQKSVQVKISEHERRSAEQKLRESEIEDSEMKTDVQPIPEITKDHISEIMNAAGPPPIPDIPAVPVTPENKSRAAGKLKISGSSTPIQTAAVVDLTCESPRPANELVNEQPLNLSNESATPTGSKSDRRSVRRSLVVRKSSSRRASLVSQFSLVSKRESMTREAVRKSIRQSISKKKAAMETSSTSSQRSCHSSIEMVDDEITIKIRPETAPSETVSEEAPAAESPRSSLRSRAFKKIAISNLSESEEPPRRVTRQMVAVDAEPTPETADDAQNNRRKSYKRAVDELSDDERPSEGECSPPRKKTPSPPCPPSKIVKPPPHMKSFLHTVQKNQFLMMTPGSIGKNITLKSFIKRNTPLKPDPKSEEKERQRLDALRKKEEAELQRKQKIEEGKKRKQEELKLRREDRLRKVLQARERVEQLEEEKKKKFEQKFAQIDEKSEKVREDRMAEEKAKKKTMVKKQEEVECRRKQEEEARKLKAKQMEEEERRHQELLQKKREEEEMERQKKMAEAKRLAEQERERQVFAEKERLRAERERERIEREKALQLQRELERAAQEKEQQRREAEERKKREQQQRLEQERLERLRTEQEVKRLQEEQQRKAKEQAAAAAAPVMNVTVDMQNSPACESYEMTPKSYKVPSVKANADNYGMDLNSDDSTDDESQPRKPIPAWASGNLLAQAVSQQYYKPIDADHMYGTIDSPKLEELFNKSKPRYFKRTSSAVWHSPPLSNRHHLAVGYGLKY.

Disordered regions lie at residues 50–124, 160–182, 255–286, 305–470, 502–555, 569–687, 702–760, and 797–819; these read AEPE…KRMT, EHER…EMKT, LVNE…SLVV, KRES…PPPH, KRNT…RRED, QLEE…RERE, ERAA…AAAA, and NYGM…KPIP. Positions 60 to 69 are enriched in basic residues; sequence SQKRRRKKRT. The span at 90–99 shows a compositional bias: low complexity; sequence SANWSSSVRR. The span at 259-272 shows a compositional bias: polar residues; sequence QPLNLSNESATPTG. The span at 305–315 shows a compositional bias: basic and acidic residues; the sequence is KRESMTREAVR. Residues 316-326 are compositionally biased toward basic residues; that stretch reads KSIRQSISKKK. Over residues 332–343 the composition is skewed to low complexity; the sequence is SSTSSQRSCHSS. Over residues 431–444 the composition is skewed to basic and acidic residues; the sequence is RAVDELSDDERPSE. Residues 455–470 are compositionally biased toward pro residues; it reads PSPPCPPSKIVKPPPH. Basic and acidic residues-rich tracts occupy residues 509–555, 569–602, 609–687, and 702–754; these read PDPK…RRED, QLEE…EEKA, KKQE…RERE, and ERAA…KAKE. An SAH region spans residues 512 to 725; the sequence is KSEEKERQRL…EERKKREQQQ (214 aa). The tract at residues 802-876 is IN box; that stretch reads LNSDDSTDDE…RTSSAVWHSP (75 aa). 2 positions are modified to phosphoserine: Ser869 and Ser870.

The protein belongs to the INCENP family. As to quaternary structure, component of the CPC at least composed of survivin/birc5, incenp, cdca8/borealin and/or cdca9/dasra-A, and aurkb/aurora-B. Interacts (via C-terminus) with aurkb (via N-terminus and kinase domain). Interacts (via N-terminus) with birc5.1, birc5.2, cdca8 and cdca9. Interacts with mtus1.

It is found in the nucleus. Its subcellular location is the chromosome. It localises to the centromere. The protein localises to the cytoplasm. The protein resides in the cytoskeleton. It is found in the spindle. Its subcellular location is the midbody. It localises to the kinetochore. Functionally, component of the chromosomal passenger complex (CPC), a complex that acts as a key regulator of mitosis. The CPC complex has essential functions at the centromere in ensuring correct chromosome alignment and segregation and is required for chromatin-induced microtubule stabilization and spindle assembly. Acts as a scaffold regulating CPC localization and activity. The C-terminus associates with aurkb/aurora-B, the N-terminus associated with cdca8/borealin and/or cdca9/dasra-A tethers the CPC to the inner centromere, and the microtubule binding activity within the central SAH domain directs aurkb/aurora-B toward substrates near microtubules. Activates aurkb. This is Inner centromere protein B (incenp-b) from Xenopus laevis (African clawed frog).